A 273-amino-acid chain; its full sequence is Vitamin B12-binding protein (273 aa).

An N-terminal signal peptide occupies residues 1–18; it reads MMKTLSSLLLLFSVSLQA. The 251-residue stretch at 23–273 folds into the Fe/B12 periplasmic-binding domain; that stretch reads RVISLAPHAT…EHFASIEQKR (251 aa). Cys-183 and Cys-263 form a disulfide bridge.

This sequence belongs to the BtuF family. In terms of assembly, the complex is composed of two ATP-binding proteins (BtuD), two transmembrane proteins (BtuC) and a solute-binding protein (BtuF).

It localises to the periplasm. Functionally, part of the ABC transporter complex BtuCDF involved in vitamin B12 import. Binds vitamin B12 and delivers it to the periplasmic surface of BtuC. This Vibrio vulnificus (strain CMCP6) protein is Vitamin B12-binding protein.